Reading from the N-terminus, the 223-residue chain is 2-C-methyl-D-erythritol 4-phosphate cytidylyltransferase (223 aa).

It belongs to the IspD/TarI cytidylyltransferase family. IspD subfamily.

It catalyses the reaction 2-C-methyl-D-erythritol 4-phosphate + CTP + H(+) = 4-CDP-2-C-methyl-D-erythritol + diphosphate. It functions in the pathway isoprenoid biosynthesis; isopentenyl diphosphate biosynthesis via DXP pathway; isopentenyl diphosphate from 1-deoxy-D-xylulose 5-phosphate: step 2/6. Functionally, catalyzes the formation of 4-diphosphocytidyl-2-C-methyl-D-erythritol from CTP and 2-C-methyl-D-erythritol 4-phosphate (MEP). The protein is 2-C-methyl-D-erythritol 4-phosphate cytidylyltransferase of Prochlorococcus marinus (strain MIT 9301).